The sequence spans 517 residues: NAD(P)H-quinone oxidoreductase subunit 2 (517 aa).

The next 14 membrane-spanning stretches (helical) occupy residues 16-36, 43-63, 80-100, 110-130, 133-153, 168-188, 211-231, 245-265, 279-299, 307-327, 335-355, 379-399, 401-421, and 467-487; these read ILPE…DLIF, WLPY…YLAW, LSIV…LMSI, LAEF…LCGA, LVMI…MTGY, LLIG…LYGL, LGLA…ISAV, PTPV…ALAI, WHFV…VVAL, MLAY…VAGT, VFYL…IILF, LALS…GFFG, IYLF…LGLV, and VGIV…NPLF.

Belongs to the complex I subunit 2 family. NDH-1 can be composed of about 15 different subunits; different subcomplexes with different compositions have been identified which probably have different functions.

The protein resides in the cellular thylakoid membrane. It catalyses the reaction a plastoquinone + NADH + (n+1) H(+)(in) = a plastoquinol + NAD(+) + n H(+)(out). It carries out the reaction a plastoquinone + NADPH + (n+1) H(+)(in) = a plastoquinol + NADP(+) + n H(+)(out). Its function is as follows. NDH-1 shuttles electrons from an unknown electron donor, via FMN and iron-sulfur (Fe-S) centers, to quinones in the respiratory and/or the photosynthetic chain. The immediate electron acceptor for the enzyme in this species is believed to be plastoquinone. Couples the redox reaction to proton translocation, and thus conserves the redox energy in a proton gradient. Cyanobacterial NDH-1 also plays a role in inorganic carbon-concentration. The sequence is that of NAD(P)H-quinone oxidoreductase subunit 2 from Rippkaea orientalis (strain PCC 8801 / RF-1) (Cyanothece sp. (strain PCC 8801)).